Consider the following 160-residue polypeptide: Iron-sulfur assembly protein IscA1 (160 aa).

This sequence belongs to the HesB/IscA family. In terms of assembly, tetramer.

The protein localises to the mitochondrion. It functions in the pathway cofactor biosynthesis; iron-sulfur cluster biosynthesis. Functionally, participates in iron-sulfur cluster formation (ISC) pathway for iron-sulfur (Fe-S) cluster biogenesis. Can bind iron and [4Fe-4S] clusters. May function as an iron chaperone. The polypeptide is Iron-sulfur assembly protein IscA1 (Plasmodium falciparum (isolate 3D7)).